A 72-amino-acid polypeptide reads, in one-letter code: DNA gyrase inhibitor YacG (72 aa).

Residues Cys-7, Cys-10, Cys-26, and Cys-30 each contribute to the Zn(2+) site. The tract at residues 44-72 (SIAGEEHTPSSDTARPQLSAEDLALLEQD) is disordered.

The protein belongs to the DNA gyrase inhibitor YacG family. Interacts with GyrB. Zn(2+) serves as cofactor.

Its function is as follows. Inhibits all the catalytic activities of DNA gyrase by preventing its interaction with DNA. Acts by binding directly to the C-terminal domain of GyrB, which probably disrupts DNA binding by the gyrase. This Tolumonas auensis (strain DSM 9187 / NBRC 110442 / TA 4) protein is DNA gyrase inhibitor YacG.